We begin with the raw amino-acid sequence, 130 residues long: Small ribosomal subunit protein eS8 (130 aa).

This sequence belongs to the eukaryotic ribosomal protein eS8 family. Part of the 30S ribosomal subunit.

The protein is Small ribosomal subunit protein eS8 of Thermococcus gammatolerans (strain DSM 15229 / JCM 11827 / EJ3).